The following is a 470-amino-acid chain: Neuraminidase (470 aa).

Residues 1–6 (MNPNQK) are Intravirion-facing. Residues 7–27 (IITIGSICMAIGIISLILQIG) traverse the membrane as a helical segment. The interval 11–33 (GSICMAIGIISLILQIGNIISIW) is involved in apical transport and lipid raft association. At 28 to 470 (NIISIWVSHS…GAELPFTIDK (443 aa)) the chain is on the virion surface side. Residues 36–90 (HSIQTGSQNHTGICNQRIITYENSTWVNQTYVNISNTNVVAGKDTTSMTLAGNSS) form a hypervariable stalk region region. N44, N58, N63, N68, and N88 each carry an N-linked (GlcNAc...) asparagine; by host glycan. A head of neuraminidase region spans residues 91 to 470 (LCPIRGWAIY…GAELPFTIDK (380 aa)). 8 disulfides stabilise this stretch: C92–C417, C124–C129, C184–C231, C233–C238, C279–C292, C281–C290, C318–C335, and C421–C447. R118 is a substrate binding site. N146 carries N-linked (GlcNAc...) asparagine; by host glycosylation. D151 functions as the Proton donor/acceptor in the catalytic mechanism. R152 contacts substrate. A glycan (N-linked (GlcNAc...) asparagine; by host) is linked at N235. Position 277 to 278 (277 to 278 (EE)) interacts with substrate. R293 serves as a coordination point for substrate. Ca(2+)-binding residues include D294, G298, and D324. N365 carries an N-linked (GlcNAc...) asparagine; by host glycan. Residue R368 participates in substrate binding. Y402 serves as the catalytic Nucleophile. The N-linked (GlcNAc...) asparagine; by host glycan is linked to N455.

The protein belongs to the glycosyl hydrolase 34 family. Homotetramer. Ca(2+) is required as a cofactor. N-glycosylated.

It localises to the virion membrane. The protein localises to the host apical cell membrane. It carries out the reaction Hydrolysis of alpha-(2-&gt;3)-, alpha-(2-&gt;6)-, alpha-(2-&gt;8)- glycosidic linkages of terminal sialic acid residues in oligosaccharides, glycoproteins, glycolipids, colominic acid and synthetic substrates.. Its activity is regulated as follows. Inhibited by the neuraminidase inhibitors zanamivir (Relenza) and oseltamivir (Tamiflu). These drugs interfere with the release of progeny virus from infected cells and are effective against all influenza strains. Resistance to neuraminidase inhibitors is quite rare. Catalyzes the removal of terminal sialic acid residues from viral and cellular glycoconjugates. Cleaves off the terminal sialic acids on the glycosylated HA during virus budding to facilitate virus release. Additionally helps virus spread through the circulation by further removing sialic acids from the cell surface. These cleavages prevent self-aggregation and ensure the efficient spread of the progeny virus from cell to cell. Otherwise, infection would be limited to one round of replication. Described as a receptor-destroying enzyme because it cleaves a terminal sialic acid from the cellular receptors. May facilitate viral invasion of the upper airways by cleaving the sialic acid moieties on the mucin of the airway epithelial cells. Likely to plays a role in the budding process through its association with lipid rafts during intracellular transport. May additionally display a raft-association independent effect on budding. Plays a role in the determination of host range restriction on replication and virulence. Sialidase activity in late endosome/lysosome traffic seems to enhance virus replication. In Influenza A virus (strain A/Brazil/11/1978 H1N1), this protein is Neuraminidase.